The chain runs to 181 residues: Transcription factor bHLH167 (181 aa).

Residues 1 to 22 form a disordered region; the sequence is MGRAREIGEGNSSSLREQRNLR. The region spanning 14–63 is the bHLH domain; the sequence is SLREQRNLREKDRRMRMKHLFSILSSHVSPTRKLPVPHLIDQATSYMIQL.

The protein belongs to the bHLH protein family.

It is found in the nucleus. The polypeptide is Transcription factor bHLH167 (Arabidopsis thaliana (Mouse-ear cress)).